Here is a 353-residue protein sequence, read N- to C-terminus: Ion-translocating oxidoreductase complex subunit D (353 aa).

A run of 3 helical transmembrane segments spans residues 20-39 (LMRL…WYFF), 68-88 (PISH…LGIC), and 129-149 (VMLL…LTLV). An FMN phosphoryl threonine modification is found at threonine 187. Helical transmembrane passes span 215 to 235 (LALG…FLIS), 238 to 258 (AIAW…SFIG), 267 to 287 (ASTM…FILT), and 300 to 320 (IIVG…GGYP).

Belongs to the NqrB/RnfD family. As to quaternary structure, the complex is composed of six subunits: RnfA, RnfB, RnfC, RnfD, RnfE and RnfG. FMN serves as cofactor.

It localises to the cell inner membrane. Its function is as follows. Part of a membrane-bound complex that couples electron transfer with translocation of ions across the membrane. The sequence is that of Ion-translocating oxidoreductase complex subunit D from Colwellia psychrerythraea (strain 34H / ATCC BAA-681) (Vibrio psychroerythus).